Reading from the N-terminus, the 151-residue chain is D-aminoacyl-tRNA deacylase (151 aa).

Residues 142–143 (GP) carry the Gly-cisPro motif, important for rejection of L-amino acids motif.

It belongs to the DTD family. In terms of assembly, homodimer.

The protein localises to the cytoplasm. The enzyme catalyses glycyl-tRNA(Ala) + H2O = tRNA(Ala) + glycine + H(+). It carries out the reaction a D-aminoacyl-tRNA + H2O = a tRNA + a D-alpha-amino acid + H(+). An aminoacyl-tRNA editing enzyme that deacylates mischarged D-aminoacyl-tRNAs. Also deacylates mischarged glycyl-tRNA(Ala), protecting cells against glycine mischarging by AlaRS. Acts via tRNA-based rather than protein-based catalysis; rejects L-amino acids rather than detecting D-amino acids in the active site. By recycling D-aminoacyl-tRNA to D-amino acids and free tRNA molecules, this enzyme counteracts the toxicity associated with the formation of D-aminoacyl-tRNA entities in vivo and helps enforce protein L-homochirality. The polypeptide is D-aminoacyl-tRNA deacylase (Psychrobacter arcticus (strain DSM 17307 / VKM B-2377 / 273-4)).